The primary structure comprises 145 residues: Actin-related protein 4A (145 aa).

Residues 47–66 (IDDAANTTEDAKESDKEKGK) are disordered. Positions 55–64 (EDAKESDKEK) are enriched in basic and acidic residues.

Belongs to the actin family. ARP4 subfamily. As to expression, expressed in roots, leaves and flowers.

The sequence is that of Actin-related protein 4A (ARP4A) from Arabidopsis thaliana (Mouse-ear cress).